A 456-amino-acid polypeptide reads, in one-letter code: Probable glycine dehydrogenase (decarboxylating) subunit 1 (456 aa).

This sequence belongs to the GcvP family. N-terminal subunit subfamily. The glycine cleavage system is composed of four proteins: P, T, L and H. In this organism, the P 'protein' is a heterodimer of two subunits.

It carries out the reaction N(6)-[(R)-lipoyl]-L-lysyl-[glycine-cleavage complex H protein] + glycine + H(+) = N(6)-[(R)-S(8)-aminomethyldihydrolipoyl]-L-lysyl-[glycine-cleavage complex H protein] + CO2. In terms of biological role, the glycine cleavage system catalyzes the degradation of glycine. The P protein binds the alpha-amino group of glycine through its pyridoxal phosphate cofactor; CO(2) is released and the remaining methylamine moiety is then transferred to the lipoamide cofactor of the H protein. This is Probable glycine dehydrogenase (decarboxylating) subunit 1 from Legionella pneumophila subsp. pneumophila (strain Philadelphia 1 / ATCC 33152 / DSM 7513).